We begin with the raw amino-acid sequence, 97 residues long: Carboxysome shell protein CsoS1B (97 aa).

In terms of domain architecture, BMC spans 8–93 (ALGMIETRGL…PHKEVEPVLT (86 aa)).

It belongs to the bacterial microcompartments protein family. CsoS1 subfamily. Homohexamer with a small central pore.

It localises to the carboxysome. In terms of biological role, one of shell proteins of the carboxysome, a polyhedral inclusion where RuBisCO (ribulose bisphosphate carboxylase, ccbL-ccbS) is sequestered. Assembles into hexamers which make sheets that form the facets of the polyhedral carboxysome. The shell probably limits the diffusion of CO(2) into and out of the carboxysome. This chain is Carboxysome shell protein CsoS1B, found in Hydrogenovibrio crunogenus (strain DSM 25203 / XCL-2) (Thiomicrospira crunogena).